Here is a 744-residue protein sequence, read N- to C-terminus: Tripartite motif-containing protein 2 (744 aa).

Ser-10 bears the Phosphoserine mark. Residues 23 to 64 form an RING-type zinc finger; sequence CSICLERYKNPKVLPCLHTFCERCLQNYIPAHSLTLSCPVCR. Residues 113–154 form a B box-type zinc finger; sequence GKPLSCPNHDGNVMDFYCQSCETAMCRECTEGEHAEHPTVPL. Zn(2+)-binding residues include Cys-118, His-121, Cys-141, and His-146. One copy of the Filamin repeat lies at 320–421; sequence TTNAVASETV…IRGSPFKLKV (102 aa). The residue at position 371 (Thr-371) is a Phosphothreonine. Ser-375, Ser-424, and Ser-428 each carry phosphoserine. The disordered stretch occupies residues 432 to 462; the sequence is EGVKRRVKSPGSGHVKQKAVKRPASMYSTGK. NHL repeat units lie at residues 473–516, 520–563, 564–605, 609–652, 656–699, and 700–743; these read IFRV…FSND, KSRF…FSSD, GKFK…FQPN, VTRF…FNQE, MLKF…FDGS, and GSFL…YRYL.

The protein belongs to the TRIM/RBCC family. Forms homooligomers. Interacts with TRIM3; this interaction reduces TRIM2 activity. Interacts with myosin V; myosin V may not be a substrate for ubiquitination. Interacts with NEFL. Interacts with phosphorylated BCL2L11. Interacts with SIRPA. Post-translationally, RING-type zinc finger-dependent and UBE2D1-dependent autoubiquitination.

The protein resides in the cytoplasm. It catalyses the reaction S-ubiquitinyl-[E2 ubiquitin-conjugating enzyme]-L-cysteine + [acceptor protein]-L-lysine = [E2 ubiquitin-conjugating enzyme]-L-cysteine + N(6)-ubiquitinyl-[acceptor protein]-L-lysine.. It participates in protein modification; protein ubiquitination. UBE2D1-dependent E3 ubiquitin-protein ligase that mediates the ubiquitination of NEFL and of phosphorylated BCL2L11. Plays a neuroprotective function. May play a role in neuronal rapid ischemic tolerance. Plays a role in antiviral immunity and limits New World arenavirus infection independently of its ubiquitin ligase activity. In Bos taurus (Bovine), this protein is Tripartite motif-containing protein 2 (TRIM2).